Reading from the N-terminus, the 616-residue chain is UvrABC system protein C (616 aa).

The 79-residue stretch at 21–99 folds into the GIY-YIG domain; that stretch reads HQPGVYRMYD…IKLYLPKYNV (79 aa). Residues 209–244 form the UVR domain; the sequence is RQVIASLVEKMEQASQSLNFEQAATFRDQIQALRRV.

It belongs to the UvrC family. As to quaternary structure, interacts with UvrB in an incision complex.

The protein resides in the cytoplasm. In terms of biological role, the UvrABC repair system catalyzes the recognition and processing of DNA lesions. UvrC both incises the 5' and 3' sides of the lesion. The N-terminal half is responsible for the 3' incision and the C-terminal half is responsible for the 5' incision. In Photobacterium profundum (strain SS9), this protein is UvrABC system protein C.